A 370-amino-acid polypeptide reads, in one-letter code: MTKHRVVVGLSGGVDSAVTAHLLKQQGHEVVGIFMKNWEDDDDSEFCSSRQDFLDAASVADVIGIEIEHVNFAAEYKDRVFAEFLREYQAGRTPNPDVLCNAEIKFKAFLDHAMRLGAEKIATGHYARVRQNPATGLFELLKGLDPSKDQSYFLHRLNQAQLSKTLFPVGDLHKTEVRRIAADIGLPNAKKKDSTGICFIGERPFREFLNRYIQHAPGPILDDRGRKLGRHVGLSFYTLGQRQGLGIGGVKEKGAQRGAGDHAPWFVARKELETNTLRVVQGHEHPWLLSHRLDAQDASWIAGHPPAAGACAAKTRYRQQDAACTVLAAQGDAFSLQFPEAQWAVTPGQSAVLYDGEVCLGGGVIAAVNG.

ATP-binding positions include 9–16 and methionine 35; that span reads GLSGGVDS. The interval 95-97 is interaction with target base in tRNA; the sequence is NPD. Residue cysteine 100 is the Nucleophile of the active site. An intrachain disulfide couples cysteine 100 to cysteine 198. Glycine 124 is a binding site for ATP. Positions 148 to 150 are interaction with tRNA; it reads KDQ. Cysteine 198 (cysteine persulfide intermediate) is an active-site residue. An interaction with tRNA region spans residues 316-317; that stretch reads RY.

This sequence belongs to the MnmA/TRMU family.

The protein resides in the cytoplasm. It carries out the reaction S-sulfanyl-L-cysteinyl-[protein] + uridine(34) in tRNA + AH2 + ATP = 2-thiouridine(34) in tRNA + L-cysteinyl-[protein] + A + AMP + diphosphate + H(+). Functionally, catalyzes the 2-thiolation of uridine at the wobble position (U34) of tRNA, leading to the formation of s(2)U34. The sequence is that of tRNA-specific 2-thiouridylase MnmA from Acidovorax ebreus (strain TPSY) (Diaphorobacter sp. (strain TPSY)).